Consider the following 977-residue polypeptide: MRGARGAWDFLFVLLLLLLVQTGSSQPSVSPGELSLPSIHPAKSELIVSVGDEIRLLCTDPGFVKWTFEILGQLSEKTNPEWITEKAEATNTGNYTCTNKGGLSSSIYVFVRDPEKLFLIDLPLYGKEENDTLVRCPLTDPEVTNYSLTGCEGKPLPKDLTFVADPKAGITIRNVKREYHRLCLHCSANQRGKSMLSKKFTLKVRAAIKAVPVVSVSKTSYLLREGEEFAVTCLIKDVSSSVDSMWIKENSQQTKAQTKKNSWHQGDFSYLRQERLTISSARVNDSGVFMCYANNTFGSANVTTTLEVVDKGFINIFPMMNTTVFVNDGENVDLVVEYEAYPKPVHRQWIYMNRTSTDKWDDYPKSENESNIRYVNELHLTRLKGTEGGTYTFHVSNSDVNSSVTFNVYVNTKPEILTHDRLVNGMLQCVAAGFPEPTIDWYFCPGTEQRCSVPVGPVDVQIQNSSVSPFGKLVVYSTIDDSTFKHNGTVECRAYNDVGKSSASFNFAFKGNSKEQIHAHTLFTPLLIGFVIAAGLMCIFVMILTYKYLQKPMYEVQWKVVEEINGNNYVYIDPTQLPYDHKWEFPRNRLSFGKTLGAGAFGKVVEATAYGLIKSDAAMTVAVKMLKPSAHLTEREALMSELKVLSYLGNHMNIVNLLGACTIGGPTLVITEYCCYGDLLNFLRRKRDSFICSKQEDHAEVALYKNLLHSKESSCNDSTNEYMDMKPGVSYVVPTKADKRRSARIGSYIERDVTPAIMEDDELALDLEDLLSFSYQVAKGMAFLASKNCIHRDLAARNILLTHGRITKICDFGLARDIKNDSNYVVKGNARLPVKWMAPESIFNCVYTFESDVWSYGIFLWELFSLGSSPYPGMPVDSKFYKMIKEGFRMLSPEHAPAEMYDIMKTCWDADPLKRPTFKQIVQLIEKQISESTNHIYSNLANCSPHRENPAVDHSVRINSVGSSASSTQPLLVHEDV.

A signal peptide spans 1–25; the sequence is MRGARGAWDFLFVLLLLLLVQTGSS. The Extracellular portion of the chain corresponds to 26 to 525; that stretch reads QPSVSPGELS…QIHAHTLFTP (500 aa). Ig-like C2-type domains lie at 27–112, 121–205, 212–309, 318–411, and 414–508; these read PSVS…VFVR, DLPL…LKVR, PVVS…LEVV, PMMN…VYVN, and PEIL…FNFA. The cysteines at positions 58 and 97 are disulfide-linked. Residues asparagine 94, asparagine 130, and asparagine 145 are each glycosylated (N-linked (GlcNAc...) asparagine). Cystine bridges form between cysteine 136–cysteine 186, cysteine 151–cysteine 183, and cysteine 233–cysteine 291. Residues asparagine 284, asparagine 294, asparagine 301, asparagine 321, asparagine 353, asparagine 368, asparagine 401, asparagine 464, and asparagine 487 are each glycosylated (N-linked (GlcNAc...) asparagine). Cysteine 429 and cysteine 492 form a disulfide bridge. Residues 526 to 546 form a helical membrane-spanning segment; it reads LLIGFVIAAGLMCIFVMILTY. The Cytoplasmic portion of the chain corresponds to 547 to 977; sequence KYLQKPMYEV…TQPLLVHEDV (431 aa). Residues tyrosine 548 and tyrosine 554 each carry the phosphotyrosine modification. Tyrosine 569 contributes to the Mg(2+) binding site. Phosphotyrosine; by autocatalysis occurs at positions 569 and 571. The segment at 569–571 is important for interaction with phosphotyrosine-binding proteins; that stretch reads YVY. The Protein kinase domain maps to 590–938; sequence LSFGKTLGAG…ISESTNHIYS (349 aa). Residues 597-604, lysine 624, and 672-678 each bind ATP; these read GAGAFGKV and EYCCYGD. 2 positions are modified to phosphotyrosine; by autocatalysis: tyrosine 704 and tyrosine 722. Position 731 is a phosphotyrosine (tyrosine 731). 2 positions are modified to phosphoserine; by PKC/PRKCA: serine 742 and serine 747. The active-site Proton acceptor is aspartate 793. Arginine 797 contacts ATP. Mg(2+) contacts are provided by asparagine 798 and aspartate 811. At serine 822 the chain carries Phosphoserine. Tyrosine 824 bears the Phosphotyrosine; by autocatalysis mark. Serine 892 is modified (phosphoserine). Position 901 is a phosphotyrosine (tyrosine 901). Tyrosine 937 bears the Phosphotyrosine; by autocatalysis mark. Position 960 is a phosphoserine (serine 960).

The protein belongs to the protein kinase superfamily. Tyr protein kinase family. CSF-1/PDGF receptor subfamily. As to quaternary structure, monomer in the absence of bound KITLG/SCF. Homodimer in the presence of bound KITLG/SCF, forming a heterotetramer with two KITLG/SCF molecules. Interacts (via phosphorylated tyrosine residues) with the adapter proteins GRB2 and GRB7 (via SH2 domain), and SH2B2/APS. Interacts (via C-terminus) with MPDZ (via the tenth PDZ domain). Interacts (via phosphorylated tyrosine residues) with PIK3R1 and PIK3CD. Interacts (via phosphorylated tyrosine) with CRK (isoform Crk-II), FYN, SHC1 and MATK/CHK (via SH2 domain). Interacts with LYN and FES/FPS. Interacts (via phosphorylated tyrosine residues) with the protein phosphatases PTPN6/SHP-1 (via SH2 domain), PTPN11/SHP-2 (via SH2 domain) and PTPRU. Interacts with PLCG1. Interacts with DOK1 and TEC. Interacts with IL1RAP (independent of stimulation with KITLG/SCF). A mast cell-specific KITLG/SCF-induced interleukin-33 signaling complex contains IL1RL1, IL1RAP, KIT and MYD88. Post-translationally, ubiquitinated by SOCS6. KIT is rapidly ubiquitinated after autophosphorylation induced by KITLG/SCF binding, leading to internalization and degradation. In terms of processing, autophosphorylated on tyrosine residues. KITLG/SCF binding promotes autophosphorylation. Phosphorylated tyrosine residues are important for interaction with specific binding partners.

The protein localises to the cell membrane. It carries out the reaction L-tyrosyl-[protein] + ATP = O-phospho-L-tyrosyl-[protein] + ADP + H(+). Present in an inactive conformation in the absence of bound ligand. KITLG/SCF binding leads to dimerization and activation by autophosphorylation on tyrosine residues. Activity is down-regulated by PRKCA-mediated phosphorylation on serine residues. Tyrosine-protein kinase that acts as a cell-surface receptor for the cytokine KITLG/SCF and plays an essential role in the regulation of cell survival and proliferation, hematopoiesis, stem cell maintenance, gametogenesis, mast cell development, migration and function, and in melanogenesis. In response to KITLG/SCF binding, KIT can activate several signaling pathways. Phosphorylates PIK3R1, PLCG1, SH2B2/APS and CBL. Activates the AKT1 signaling pathway by phosphorylation of PIK3R1, the regulatory subunit of phosphatidylinositol 3-kinase. Activated KIT also transmits signals via GRB2 and activation of RAS, RAF1 and the MAP kinases MAPK1/ERK2 and/or MAPK3/ERK1. Promotes activation of STAT family members STAT1, STAT3, STAT5A and STAT5B. Activation of PLCG1 leads to the production of the cellular signaling molecules diacylglycerol and inositol 1,4,5-trisphosphate. KIT signaling is modulated by protein phosphatases, and by rapid internalization and degradation of the receptor. Activated KIT promotes phosphorylation of the protein phosphatases PTPN6/SHP-1 and PTPRU, and of the transcription factors STAT1, STAT3, STAT5A and STAT5B. Promotes phosphorylation of PIK3R1, CBL, CRK (isoform Crk-II), LYN, MAPK1/ERK2 and/or MAPK3/ERK1, PLCG1, SRC and SHC1. The protein is Mast/stem cell growth factor receptor Kit (KIT) of Bos taurus (Bovine).